The sequence spans 914 residues: Trafficking kinesin-binding protein 2 (914 aa).

Positions 1 to 21 (MSQSQNAIFTSPTGEENLMNS) are enriched in polar residues. Residues 1-30 (MSQSQNAIFTSPTGEENLMNSNHRDSESIT) form a disordered region. The 306-residue stretch at 48-353 (EEQLPQYRLK…QEEIKELRSR (306 aa)) folds into the HAP1 N-terminal domain. Positions 134–354 (QALLKRNHVL…EEIKELRSRS (221 aa)) form a coiled coil. The segment at 359–509 (HLYFSQSYGA…KQFFAEEWQR (151 aa)) is interaction with HGS. The residue at position 420 (Ser420) is a Phosphoserine. Disordered stretches follow at residues 447-482 (QQTE…DSDL) and 765-787 (QPLP…SPCP). Polar residues predominate over residues 454–471 (LLNQGSSSEEVAGSSQKM). The span at 775–787 (STPPNSPSHSPCP) shows a compositional bias: pro residues.

It belongs to the milton family. In terms of assembly, interacts with GABA-A receptor and O-GlcNAc transferase. Interacts with HGS. Interacts with RHOT1/Miro-1 and RHOT2/Miro-2. O-glycosylated. As to expression, widely expressed, with highest expression in heart.

It is found in the cytoplasm. The protein localises to the early endosome. Its subcellular location is the mitochondrion. Its function is as follows. May regulate endosome-to-lysosome trafficking of membrane cargo, including EGFR. This chain is Trafficking kinesin-binding protein 2 (TRAK2), found in Homo sapiens (Human).